Here is a 183-residue protein sequence, read N- to C-terminus: ATP synthase subunit delta (183 aa).

This sequence belongs to the ATPase delta chain family. In terms of assembly, F-type ATPases have 2 components, F(1) - the catalytic core - and F(0) - the membrane proton channel. F(1) has five subunits: alpha(3), beta(3), gamma(1), delta(1), epsilon(1). F(0) has three main subunits: a(1), b(2) and c(10-14). The alpha and beta chains form an alternating ring which encloses part of the gamma chain. F(1) is attached to F(0) by a central stalk formed by the gamma and epsilon chains, while a peripheral stalk is formed by the delta and b chains.

Its subcellular location is the cell inner membrane. In terms of biological role, f(1)F(0) ATP synthase produces ATP from ADP in the presence of a proton or sodium gradient. F-type ATPases consist of two structural domains, F(1) containing the extramembraneous catalytic core and F(0) containing the membrane proton channel, linked together by a central stalk and a peripheral stalk. During catalysis, ATP synthesis in the catalytic domain of F(1) is coupled via a rotary mechanism of the central stalk subunits to proton translocation. This protein is part of the stalk that links CF(0) to CF(1). It either transmits conformational changes from CF(0) to CF(1) or is implicated in proton conduction. The sequence is that of ATP synthase subunit delta from Desulforapulum autotrophicum (strain ATCC 43914 / DSM 3382 / VKM B-1955 / HRM2) (Desulfobacterium autotrophicum).